Consider the following 221-residue polypeptide: Imidazole glycerol phosphate synthase subunit HisH (221 aa).

One can recognise a Glutamine amidotransferase type-1 domain in the interval 9–221; sequence DVVIIDTGCA…QILGNFLKMQ (213 aa). The active-site Nucleophile is the cysteine 84. Catalysis depends on residues histidine 202 and glutamate 204.

In terms of assembly, heterodimer of HisH and HisF.

It is found in the cytoplasm. It carries out the reaction 5-[(5-phospho-1-deoxy-D-ribulos-1-ylimino)methylamino]-1-(5-phospho-beta-D-ribosyl)imidazole-4-carboxamide + L-glutamine = D-erythro-1-(imidazol-4-yl)glycerol 3-phosphate + 5-amino-1-(5-phospho-beta-D-ribosyl)imidazole-4-carboxamide + L-glutamate + H(+). The catalysed reaction is L-glutamine + H2O = L-glutamate + NH4(+). Its pathway is amino-acid biosynthesis; L-histidine biosynthesis; L-histidine from 5-phospho-alpha-D-ribose 1-diphosphate: step 5/9. Functionally, IGPS catalyzes the conversion of PRFAR and glutamine to IGP, AICAR and glutamate. The HisH subunit catalyzes the hydrolysis of glutamine to glutamate and ammonia as part of the synthesis of IGP and AICAR. The resulting ammonia molecule is channeled to the active site of HisF. In Shewanella oneidensis (strain ATCC 700550 / JCM 31522 / CIP 106686 / LMG 19005 / NCIMB 14063 / MR-1), this protein is Imidazole glycerol phosphate synthase subunit HisH.